The following is a 309-amino-acid chain: Tagatose-6-phosphate kinase (309 aa).

Belongs to the carbohydrate kinase PfkB family. LacC subfamily.

It catalyses the reaction D-tagatofuranose 6-phosphate + ATP = D-tagatofuranose 1,6-bisphosphate + ADP + H(+). It functions in the pathway carbohydrate metabolism; D-tagatose 6-phosphate degradation; D-glyceraldehyde 3-phosphate and glycerone phosphate from D-tagatose 6-phosphate: step 1/2. In Streptococcus pyogenes serotype M5 (strain Manfredo), this protein is Tagatose-6-phosphate kinase.